An 80-amino-acid polypeptide reads, in one-letter code: Acyl carrier protein (80 aa).

Positions 3–78 constitute a Carrier domain; that stretch reads DDTFSRIQSI…QVLEYIEAES (76 aa). Serine 38 bears the O-(pantetheine 4'-phosphoryl)serine mark.

Belongs to the acyl carrier protein (ACP) family. In terms of processing, 4'-phosphopantetheine is transferred from CoA to a specific serine of apo-ACP by AcpS. This modification is essential for activity because fatty acids are bound in thioester linkage to the sulfhydryl of the prosthetic group.

It is found in the plastid. The protein resides in the chloroplast. The protein operates within lipid metabolism; fatty acid biosynthesis. Functionally, carrier of the growing fatty acid chain in fatty acid biosynthesis. The polypeptide is Acyl carrier protein (Trieres chinensis (Marine centric diatom)).